Consider the following 65-residue polypeptide: Small ribosomal subunit protein bS21 (65 aa).

A disordered region spans residues D44–S65. Residues K48–Q57 show a composition bias toward basic residues.

The protein belongs to the bacterial ribosomal protein bS21 family.

The chain is Small ribosomal subunit protein bS21 from Prosthecochloris aestuarii (strain DSM 271 / SK 413).